A 757-amino-acid chain; its full sequence is Transmembrane channel-like protein 1 (757 aa).

Residues 1–74 (MLQIQVEEKE…RRRLRRGAEE (74 aa)) form a disordered region. Over 1–176 (MLQIQVEEKE…KIKAIESQFG (176 aa)) the chain is Cytoplasmic. A compositionally biased stretch (acidic residues) spans 8 to 23 (EKEEDTEESSSEEEED). Residue Ser30 is modified to Phosphoserine. Thr38 carries the post-translational modification Phosphothreonine. The span at 43–54 (NEDDPEPEPEDE) shows a compositional bias: acidic residues. The interval 81–130 (EELERLKALLDENRQMIATVKCKPWKMEKKIEVLKEAKKFVSENEGALGK) is required for interaction with CIB2. Ser122 is subject to Phosphoserine. The chain crosses the membrane as a helical span at residues 177 to 214 (SSVASYFLFLRWMYGVNMVLFVLTFSLIMLPEYLWGLP). The Extracellular portion of the chain corresponds to 215-265 (YGSLPRKTVPRAEEASAANFGVLYDFNGLAQYSVLFYGYYDNKRTIGWLNF). Residues 266–297 (RLPLSYFLVGIMCIGYSFLVVLKAMTKNIGDD) form a helical membrane-spanning segment. The tract at residues 298–352 (GGGDDNTFNFSWKVFCSWDYLIGNPETADNKFNSITMNFKEAIIEERAAQVEENI) is required for interaction with CIB2. The Cytoplasmic segment spans residues 298 to 353 (GGGDDNTFNFSWKVFCSWDYLIGNPETADNKFNSITMNFKEAIIEERAAQVEENIH). Ser308 bears the Phosphoserine mark. A helical transmembrane segment spans residues 354–384 (LIRFLRFLANFFVFLTLGASGYLIFWAVKRS). Topologically, residues 385 to 396 (QEFAQQDPDTLG) are extracellular. At Thr394 the chain carries Phosphothreonine. Residues 397–424 (WWEKNEMNMVMSLLGMFCPTLFDLFAEL) traverse the membrane as a helical segment. The Cytoplasmic portion of the chain corresponds to 425-428 (EDYH). The helical transmembrane segment at 429–463 (PLIALKWLLGRIFALLLGNLYVFILALMDEINNKI) threads the bilayer. Residues 464–512 (EEEKLVKANITLWEANMIKAYNESLSGLSGNTTGAPFFVHPADVPRGPC) are Extracellular-facing. A helical membrane pass occupies residues 513–550 (WETMVGQEFVRLTVSDVLTTYVTILIGDFLRACFVRFC). Residues 551-569 (NYCWCWDLEYGYPSYTEFD) lie on the Cytoplasmic side of the membrane. Residues 570–590 (ISGNVLALIFNQGMIWMGSFF) form a helical membrane-spanning segment. The Extracellular portion of the chain corresponds to 591-593 (APS). The helical transmembrane segment at 594–616 (LPGINILRLHTSMYFQCWAVMCC) threads the bilayer. Topologically, residues 617–630 (NVPEARVFKASRSN) are cytoplasmic. A helical transmembrane segment spans residues 631–654 (NFYLGMLLLILFLSTMPVLYMIVS). The Extracellular portion of the chain corresponds to 655-697 (LPPSFDCGPFSGKNRMFEVIGETLEHDFPSWMAKILRQLSNPG). A helical transmembrane segment spans residues 698–731 (LVIAVILVMVLTIYYLNATAKGQKAANLDLKKKM). At 732–757 (KQQALENKMRNKKMAAARAAAAAGGQ) the chain is on the cytoplasmic side.

Belongs to the TMC family. Forms the MET channel composed of TMC dimer (TMC1 or TMC2), TMIE, TOMT, CIB (CIB2 or CIB3), LHFPL5 and PCDH15. Interacts with PIEZO1 and PIEZO2; the interaction may be part of the MET complex. The interaction of TMC1 and TMC2 with TOMT is required for the transportation of TMC1/2 into the stereocilia of hair cells. Interacts (via N-terminus) with both isoforms CD1 and CD3 of PCDH15. Can form a heterodimer with TMC2, TMC5 or TMC7. In terms of tissue distribution, detected in cochlear inner and outer hair cells and in neurosensory epithelia of the vestibular end organs. Also expressed in cortex, cerebellum, eye, colon, ovary and testis.

Its subcellular location is the cell membrane. The enzyme catalyses Ca(2+)(in) = Ca(2+)(out). Its function is as follows. Pore-forming subunit of the mechanotransducer (MET) non-selective cation channel complex located at the tips of stereocilia of cochlear hair cells and that mediates sensory transduction in the auditory system. The MET complex is composed of two dimeric pore-forming ion-conducting transmembrane TMC (TMC1 or TMC2) subunits, several auxiliary proteins including LHFPL5, TMIE, CIB2/3 and TOMT, the tip-link PCDH15, and possibly the PIEZO subunits. MET channel is activated by tension in the tip-link extending from the side wall of one stereocilium to the tip of the adjacent shorter stereocilium, where the channel is located. TMC1 MET channel is highly permeable to calcium and likely transports monovalent cations. Also involved in vestibular hair cells transduction current. This chain is Transmembrane channel-like protein 1, found in Mus musculus (Mouse).